Here is a 507-residue protein sequence, read N- to C-terminus: Pyruvate kinase (507 aa).

R50 is a substrate binding site. 4 residues coordinate K(+): N52, S54, D84, and T85. Position 52-55 (52-55 (NFSH)) interacts with ATP. 2 residues coordinate ATP: R91 and K177. Residue E242 coordinates Mg(2+). Substrate-binding residues include G265, D266, and T298. D266 lines the Mg(2+) pocket.

This sequence belongs to the pyruvate kinase family. Homotetramer. Mg(2+) is required as a cofactor. The cofactor is K(+).

The catalysed reaction is pyruvate + ATP = phosphoenolpyruvate + ADP + H(+). Its pathway is carbohydrate degradation; glycolysis; pyruvate from D-glyceraldehyde 3-phosphate: step 5/5. This chain is Pyruvate kinase (pyk), found in Dictyostelium discoideum (Social amoeba).